Consider the following 251-residue polypeptide: Triosephosphate isomerase (251 aa).

Residue 9–11 (NWK) participates in substrate binding. Residue His94 is the Electrophile of the active site. Catalysis depends on Glu166, which acts as the Proton acceptor. Substrate is bound by residues Gly172, Ser211, and 232–233 (GG).

It belongs to the triosephosphate isomerase family. As to quaternary structure, homodimer.

Its subcellular location is the cytoplasm. It carries out the reaction D-glyceraldehyde 3-phosphate = dihydroxyacetone phosphate. It participates in carbohydrate biosynthesis; gluconeogenesis. It functions in the pathway carbohydrate degradation; glycolysis; D-glyceraldehyde 3-phosphate from glycerone phosphate: step 1/1. Functionally, involved in the gluconeogenesis. Catalyzes stereospecifically the conversion of dihydroxyacetone phosphate (DHAP) to D-glyceraldehyde-3-phosphate (G3P). This chain is Triosephosphate isomerase, found in Xanthomonas euvesicatoria pv. vesicatoria (strain 85-10) (Xanthomonas campestris pv. vesicatoria).